The primary structure comprises 318 residues: NADH-ubiquinone oxidoreductase chain 1 (318 aa).

The next 8 helical transmembrane spans lie at 3–23 (MVNL…LTLI), 70–90 (MFII…IPLP), 100–120 (LAVL…LWSG), 146–166 (LAII…STLI), 171–191 (HTWL…STLA), 222–242 (LFFM…AILF), 253–273 (ELYT…FLWI), and 294–314 (LPLT…MAGI).

The protein belongs to the complex I subunit 1 family.

Its subcellular location is the mitochondrion inner membrane. It carries out the reaction a ubiquinone + NADH + 5 H(+)(in) = a ubiquinol + NAD(+) + 4 H(+)(out). Its function is as follows. Core subunit of the mitochondrial membrane respiratory chain NADH dehydrogenase (Complex I) that is believed to belong to the minimal assembly required for catalysis. Complex I functions in the transfer of electrons from NADH to the respiratory chain. The immediate electron acceptor for the enzyme is believed to be ubiquinone. The polypeptide is NADH-ubiquinone oxidoreductase chain 1 (MT-ND1) (Pteropus vampyrus (Large flying fox)).